The following is a 439-amino-acid chain: uncharacterized protein (439 aa).

Disordered stretches follow at residues 1–36 (MRPG…SKQA), 126–157 (SRTG…GVPI), and 411–439 (FRSD…AVPR).

This is an uncharacterized protein from Streptomyces fradiae (Streptomyces roseoflavus).